Reading from the N-terminus, the 157-residue chain is Large ribosomal subunit protein uL22 (157 aa).

Belongs to the universal ribosomal protein uL22 family. In terms of assembly, part of the 50S ribosomal subunit.

This protein binds specifically to 23S rRNA. It makes multiple contacts with different domains of the 23S rRNA in the assembled 50S subunit and ribosome. In terms of biological role, the globular domain of the protein is located near the polypeptide exit tunnel on the outside of the subunit, while an extended beta-hairpin is found that lines the wall of the exit tunnel in the center of the 70S ribosome. In Staphylothermus marinus (strain ATCC 43588 / DSM 3639 / JCM 9404 / F1), this protein is Large ribosomal subunit protein uL22.